Reading from the N-terminus, the 289-residue chain is 4-diphosphocytidyl-2-C-methyl-D-erythritol kinase (289 aa).

Residue Lys-16 is part of the active site. Pro-99–Ser-109 contributes to the ATP binding site. The active site involves Asp-141.

Belongs to the GHMP kinase family. IspE subfamily.

It catalyses the reaction 4-CDP-2-C-methyl-D-erythritol + ATP = 4-CDP-2-C-methyl-D-erythritol 2-phosphate + ADP + H(+). It participates in isoprenoid biosynthesis; isopentenyl diphosphate biosynthesis via DXP pathway; isopentenyl diphosphate from 1-deoxy-D-xylulose 5-phosphate: step 3/6. Functionally, catalyzes the phosphorylation of the position 2 hydroxy group of 4-diphosphocytidyl-2C-methyl-D-erythritol. This Ralstonia nicotianae (strain ATCC BAA-1114 / GMI1000) (Ralstonia solanacearum) protein is 4-diphosphocytidyl-2-C-methyl-D-erythritol kinase.